We begin with the raw amino-acid sequence, 497 residues long: Cytochrome P450 3A18 (497 aa).

Cys-442 serves as a coordination point for heme.

This sequence belongs to the cytochrome P450 family. Heme serves as cofactor.

It localises to the endoplasmic reticulum membrane. It is found in the microsome membrane. The catalysed reaction is an organic molecule + reduced [NADPH--hemoprotein reductase] + O2 = an alcohol + oxidized [NADPH--hemoprotein reductase] + H2O + H(+). Its function is as follows. Catalyzes 16-beta- and 6-alpha-hydroxylations of testosterone. The sequence is that of Cytochrome P450 3A18 (Cyp3a18) from Rattus norvegicus (Rat).